The primary structure comprises 702 residues: Ribosomal RNA large subunit methyltransferase K/L (702 aa).

In terms of domain architecture, THUMP spans 43–154 (LVYQSLMWSR…KETASIALDL (112 aa)).

It belongs to the methyltransferase superfamily. RlmKL family.

The protein localises to the cytoplasm. It catalyses the reaction guanosine(2445) in 23S rRNA + S-adenosyl-L-methionine = N(2)-methylguanosine(2445) in 23S rRNA + S-adenosyl-L-homocysteine + H(+). It carries out the reaction guanosine(2069) in 23S rRNA + S-adenosyl-L-methionine = N(2)-methylguanosine(2069) in 23S rRNA + S-adenosyl-L-homocysteine + H(+). Specifically methylates the guanine in position 2445 (m2G2445) and the guanine in position 2069 (m7G2069) of 23S rRNA. The chain is Ribosomal RNA large subunit methyltransferase K/L from Escherichia coli (strain SMS-3-5 / SECEC).